A 404-amino-acid chain; its full sequence is Serine palmitoyltransferase (404 aa).

Pyridoxal 5'-phosphate is bound by residues 112–113 (GY), S185, H213, and T241. Position 244 is an N6-(pyridoxal phosphate)lysine (K244).

It belongs to the class-II pyridoxal-phosphate-dependent aminotransferase family. Pyridoxal 5'-phosphate is required as a cofactor.

Its subcellular location is the cytoplasm. The enzyme catalyses L-serine + hexadecanoyl-CoA + H(+) = 3-oxosphinganine + CO2 + CoA. It functions in the pathway lipid metabolism; sphingolipid metabolism. Its function is as follows. Involved in de novo bacterial ceramide synthesis. Catalyzes the condensation of L-serine with palmitoyl-CoA (hexadecanoyl-CoA) to produce 3-oxosphinganine. Can also condense serine and C16:1-CoA, but shows a preference for palmitoyl-CoA. The protein is Serine palmitoyltransferase of Caulobacter vibrioides (strain NA1000 / CB15N) (Caulobacter crescentus).